The primary structure comprises 295 residues: Protein NEOXANTHIN-DEFICIENT 1 (295 aa).

Positions 221 to 251 are disordered; that stretch reads PAKVSGPSESDADKENSSEDQSSNVESVSRV.

In terms of biological role, required for neoxanthin biosynthesis. Probably not involved directly in the enzymatic conversion of violaxanthin to neoxanthin. Is necessary but not sufficient for neoxanthin synthesis. Seems not required for abscisic acid (ABA) biosynthesis in response to drought stress. The sequence is that of Protein NEOXANTHIN-DEFICIENT 1 from Solanum lycopersicum (Tomato).